A 734-amino-acid polypeptide reads, in one-letter code: Photosystem I P700 chlorophyll a apoprotein A2 (734 aa).

Helical transmembrane passes span 46 to 69 (IFASHFGQLAIIFLWTSGNLFHVA), 135 to 158 (LYTGALFLLFLSTLSLIASWLHLQ), 175 to 199 (LNHHLSGLFGVSSLAWTGHLVHVAI), 273 to 291 (MAHHHLAIAFIFLIAGHMY), 330 to 353 (IHFQLGLALASLGVITSLVAQHMY), 369 to 395 (AALYTHHQYIAGFIMTGAFAHGAIFFI), 417 to 439 (AIISHLSWASLFLGFHTLGLYVH), and 517 to 535 (FLVHHAIALGLHTTTLILV). 2 residues coordinate [4Fe-4S] cluster: Cys-559 and Cys-568. A run of 2 helical transmembrane segments spans residues 575 to 596 (AFYLAVFWMLNTIGWVTFYWHW) and 643 to 665 (LSVWAWMFLFGHLVWATGFMFLI). Chlorophyll a is bound by residues His-654, Met-662, and Tyr-670. Trp-671 is a phylloquinone binding site. The chain crosses the membrane as a helical span at residues 707-727 (LVGLAHFSVGYIFTYAAFLIA).

The protein belongs to the PsaA/PsaB family. As to quaternary structure, the PsaA/B heterodimer binds the P700 chlorophyll special pair and subsequent electron acceptors. PSI consists of a core antenna complex that captures photons, and an electron transfer chain that converts photonic excitation into a charge separation. The eukaryotic PSI reaction center is composed of at least 11 subunits. P700 is a chlorophyll a/chlorophyll a' dimer, A0 is one or more chlorophyll a, A1 is one or both phylloquinones and FX is a shared 4Fe-4S iron-sulfur center. is required as a cofactor.

It is found in the plastid. Its subcellular location is the chloroplast thylakoid membrane. The enzyme catalyses reduced [plastocyanin] + hnu + oxidized [2Fe-2S]-[ferredoxin] = oxidized [plastocyanin] + reduced [2Fe-2S]-[ferredoxin]. In terms of biological role, psaA and PsaB bind P700, the primary electron donor of photosystem I (PSI), as well as the electron acceptors A0, A1 and FX. PSI is a plastocyanin-ferredoxin oxidoreductase, converting photonic excitation into a charge separation, which transfers an electron from the donor P700 chlorophyll pair to the spectroscopically characterized acceptors A0, A1, FX, FA and FB in turn. Oxidized P700 is reduced on the lumenal side of the thylakoid membrane by plastocyanin. The chain is Photosystem I P700 chlorophyll a apoprotein A2 from Hordeum vulgare (Barley).